The following is a 295-amino-acid chain: Nucleotide-binding protein RBAM_031990 (295 aa).

16 to 23 is a binding site for ATP; sequence GMSGAGKT. 67-70 is a binding site for GTP; it reads DLRG.

It belongs to the RapZ-like family.

Its function is as follows. Displays ATPase and GTPase activities. This chain is Nucleotide-binding protein RBAM_031990, found in Bacillus velezensis (strain DSM 23117 / BGSC 10A6 / LMG 26770 / FZB42) (Bacillus amyloliquefaciens subsp. plantarum).